The sequence spans 553 residues: Chaperonin GroEL (553 aa).

ATP-binding positions include 30 to 33 (TLGP), lysine 51, 87 to 91 (DGTTT), glycine 416, and aspartate 496.

Belongs to the chaperonin (HSP60) family. In terms of assembly, forms a cylinder of 14 subunits composed of two heptameric rings stacked back-to-back. Interacts with the co-chaperonin GroES.

It localises to the cytoplasm. The catalysed reaction is ATP + H2O + a folded polypeptide = ADP + phosphate + an unfolded polypeptide.. Functionally, together with its co-chaperonin GroES, plays an essential role in assisting protein folding. The GroEL-GroES system forms a nano-cage that allows encapsulation of the non-native substrate proteins and provides a physical environment optimized to promote and accelerate protein folding. The protein is Chaperonin GroEL of Alkalilimnicola ehrlichii (strain ATCC BAA-1101 / DSM 17681 / MLHE-1).